A 370-amino-acid polypeptide reads, in one-letter code: Adaptive-response sensory kinase SasA (370 aa).

The Histidine kinase domain maps to 152–365; that stretch reads MVAHELRTPL…CFYLTVPVWQ (214 aa). Histidine 155 carries the post-translational modification Phosphohistidine; by autocatalysis.

As to quaternary structure, homooligomerizes. Interacts with KaiC. Participates in the KaiBC complex, whose core is composed of a KaiC homohexamer and 6 KaiB.

The enzyme catalyses ATP + protein L-histidine = ADP + protein N-phospho-L-histidine.. Member of the two-component regulatory system SasA/RpaA involved in genome-wide circadian gene expression. One of several clock output pathways. Participates in the Kai clock protein complex, the main circadian regulator in cyanobacteria, via its interaction with KaiC. KaiC enhances the autophosphorylation activity of SasA, which then transfers its phosphate group to RpaA to activate it. In addition to its output function, recruits fold-shifted KaiB (KaiB(fs)) to KaiC to cooperatively form the KaiB(6):KaiC(6) complex (independent of SasA kinase activity). Required for robustness of the circadian rhythm of gene expression and is involved in clock output, also required for adaptation to light/dark cycles. This chain is Adaptive-response sensory kinase SasA, found in Prochlorococcus marinus (strain MIT 9303).